Here is a 65-residue protein sequence, read N- to C-terminus: MPKLKTHRGAAKRFKVTGSGKIRRNKAFKSHILTKKSAKRKRGFRAGDLVHERDVAGVRKMLPYL.

Belongs to the bacterial ribosomal protein bL35 family.

The protein is Large ribosomal subunit protein bL35 of Magnetococcus marinus (strain ATCC BAA-1437 / JCM 17883 / MC-1).